We begin with the raw amino-acid sequence, 269 residues long: Phosphatidylglycerol--prolipoprotein diacylglyceryl transferase (269 aa).

4 helical membrane passes run 14–34 (IVQI…AGII), 49–69 (VAPE…IPMA), 89–109 (VFAI…GLLA), and 118–138 (GYSL…GQAI). Residue Arg140 coordinates a 1,2-diacyl-sn-glycero-3-phospho-(1'-sn-glycerol). The next 3 helical transmembrane spans lie at 180-200 (TFLY…FVFF), 208-228 (GSIA…IEGL), and 240-260 (TAQL…WWLN).

The protein belongs to the Lgt family.

It localises to the cell inner membrane. It catalyses the reaction L-cysteinyl-[prolipoprotein] + a 1,2-diacyl-sn-glycero-3-phospho-(1'-sn-glycerol) = an S-1,2-diacyl-sn-glyceryl-L-cysteinyl-[prolipoprotein] + sn-glycerol 1-phosphate + H(+). It functions in the pathway protein modification; lipoprotein biosynthesis (diacylglyceryl transfer). Its function is as follows. Catalyzes the transfer of the diacylglyceryl group from phosphatidylglycerol to the sulfhydryl group of the N-terminal cysteine of a prolipoprotein, the first step in the formation of mature lipoproteins. This Gloeobacter violaceus (strain ATCC 29082 / PCC 7421) protein is Phosphatidylglycerol--prolipoprotein diacylglyceryl transferase.